The chain runs to 64 residues: Long neurotoxin MS2 (64 aa).

5 disulfide bridges follow: cysteine 3–cysteine 24, cysteine 6–cysteine 11, cysteine 17–cysteine 41, cysteine 45–cysteine 57, and cysteine 58–cysteine 63.

It belongs to the three-finger toxin family. Ancestral subfamily. As to expression, expressed by the venom gland.

Its subcellular location is the secreted. Functionally, produces peripheral paralysis by blocking neuromuscular transmission at the postsynaptic site. Very weak inhibitor of the endogenous nicotinic acetylcholine receptors (nAChR) in the human rhabdomyosarcoma TE 671 cell line. Not toxic to mice by intraperitoneal injection or to zebrafish by injection at the back of the dorsolateral region. The protein is Long neurotoxin MS2 of Micrurus surinamensis (Surinam coral snake).